The following is a 43-amino-acid chain: Cytochrome b559 subunit beta (43 aa).

The chain crosses the membrane as a helical span at residues 18–34 (WLAVHGLAIPTVFFLGG). H22 contributes to the heme binding site.

It belongs to the PsbE/PsbF family. As to quaternary structure, heterodimer of an alpha subunit and a beta subunit. PSII is composed of 1 copy each of membrane proteins PsbA, PsbB, PsbC, PsbD, PsbE, PsbF, PsbH, PsbI, PsbJ, PsbK, PsbL, PsbM, PsbT, PsbX, PsbY, PsbZ, Psb30/Ycf12, at least 3 peripheral proteins of the oxygen-evolving complex and a large number of cofactors. It forms dimeric complexes. It depends on heme b as a cofactor.

Its subcellular location is the plastid. It is found in the chloroplast thylakoid membrane. Its function is as follows. This b-type cytochrome is tightly associated with the reaction center of photosystem II (PSII). PSII is a light-driven water:plastoquinone oxidoreductase that uses light energy to abstract electrons from H(2)O, generating O(2) and a proton gradient subsequently used for ATP formation. It consists of a core antenna complex that captures photons, and an electron transfer chain that converts photonic excitation into a charge separation. The protein is Cytochrome b559 subunit beta of Thalassiosira pseudonana (Marine diatom).